A 775-amino-acid chain; its full sequence is BLOC-2 complex member HPS6 (775 aa).

Component of the biogenesis of lysosome-related organelles complex-2 (or BLOC2) composed of HPS3, HPS5 and HPS6. Interacts with HPS5 and HPS3. Interacts with biogenesis of lysosome-related organelles complex-1 (BLOC1). Interacts with AP-3 complex. Interacts with MNAT1. Interacts with DCTN1 and dynein intermediate chain. As to expression, ubiquitous.

The protein resides in the microsome membrane. Its subcellular location is the cytoplasm. It is found in the cytosol. It localises to the early endosome membrane. The protein localises to the lysosome membrane. Its function is as follows. May regulate the synthesis and function of lysosomes and of highly specialized organelles, such as melanosomes and platelet dense granules. Acts as a cargo adapter for the dynein-dynactin motor complex to mediate the transport of lysosomes from the cell periphery to the perinuclear region. Facilitates retrograde lysosomal trafficking by linking the motor complex to lysosomes, and perinuclear positioning of lysosomes is crucial for the delivery of endocytic cargos to lysosomes, for lysosome maturation and functioning. This is BLOC-2 complex member HPS6 (HPS6) from Homo sapiens (Human).